The following is a 284-amino-acid chain: ATP phosphoribosyltransferase (284 aa).

The protein belongs to the ATP phosphoribosyltransferase family. Long subfamily. It depends on Mg(2+) as a cofactor.

It is found in the cytoplasm. The enzyme catalyses 1-(5-phospho-beta-D-ribosyl)-ATP + diphosphate = 5-phospho-alpha-D-ribose 1-diphosphate + ATP. It participates in amino-acid biosynthesis; L-histidine biosynthesis; L-histidine from 5-phospho-alpha-D-ribose 1-diphosphate: step 1/9. Its activity is regulated as follows. Feedback inhibited by histidine. Functionally, catalyzes the condensation of ATP and 5-phosphoribose 1-diphosphate to form N'-(5'-phosphoribosyl)-ATP (PR-ATP). Has a crucial role in the pathway because the rate of histidine biosynthesis seems to be controlled primarily by regulation of HisG enzymatic activity. This is ATP phosphoribosyltransferase from Methanococcoides burtonii (strain DSM 6242 / NBRC 107633 / OCM 468 / ACE-M).